The chain runs to 446 residues: Gamma-glutamyl phosphate reductase (446 aa).

It belongs to the gamma-glutamyl phosphate reductase family.

Its subcellular location is the cytoplasm. The catalysed reaction is L-glutamate 5-semialdehyde + phosphate + NADP(+) = L-glutamyl 5-phosphate + NADPH + H(+). Its pathway is amino-acid biosynthesis; L-proline biosynthesis; L-glutamate 5-semialdehyde from L-glutamate: step 2/2. Catalyzes the NADPH-dependent reduction of L-glutamate 5-phosphate into L-glutamate 5-semialdehyde and phosphate. The product spontaneously undergoes cyclization to form 1-pyrroline-5-carboxylate. The sequence is that of Gamma-glutamyl phosphate reductase from Sulfurihydrogenibium sp. (strain YO3AOP1).